The primary structure comprises 1024 residues: SWI/SNF-related matrix-associated actin-dependent regulator of chromatin subfamily A containing DEAD/H box 1 (1024 aa).

Position 1 is an N-acetylmethionine (Met-1). Positions 1–83 (MNLFNLDRFR…NESKASLSCF (83 aa)) are disordered. The segment covering 7–19 (DRFRFEKRSKIEE) has biased composition (basic and acidic residues). Thr-54 is modified (phosphothreonine). Ser-57 carries the phosphoserine modification. Residue Lys-77 forms a Glycyl lysine isopeptide (Lys-Gly) (interchain with G-Cter in SUMO2) linkage. Residues Ser-79, Ser-124, Ser-127, Ser-132, Ser-145, and Ser-151 each carry the phosphoserine modification. The region spanning 156 to 198 (LKDAKLQTLKELFPQRSDSDLLKLIDSTSTMDGAIAAALLKFG) is the CUE 1 domain. The tract at residues 201-250 (GGGPRKRKLSSSSEAYEEDEANDDQSLKKPRGDRREESNESAEASSNWEK) is disordered. A phosphoserine mark is found at Ser-210 and Ser-213. At Tyr-216 the chain carries Phosphotyrosine. A phosphoserine mark is found at Ser-238 and Ser-241. The CUE 2 domain occupies 250–293 (KQESIVLKLQKEFPNFDKQELREVLKEHEWMYTEALESLKVFAE). At Ser-301 the chain carries Phosphoserine. The disordered stretch occupies residues 331–369 (SMKPQNGFNKKRKKNVFNPKKAVEDSEYDSGSDAGSSLD). Glycyl lysine isopeptide (Lys-Gly) (interchain with G-Cter in SUMO2) cross-links involve residues Lys-333 and Lys-469. Positions 507 to 675 (ALVHKHGLNG…MSLLNFVMPH (169 aa)) constitute a Helicase ATP-binding domain. 519–527 (ADEMGLGKT) lines the ATP pocket. Residues 626–629 (DEGH) carry the DEGH box motif. The Nuclear localization signal signature appears at 719–736 (RRVKEEVLKLLPPKKDQI). Residue Lys-722 forms a Glycyl lysine isopeptide (Lys-Gly) (interchain with G-Cter in SUMO2) linkage. A Helicase C-terminal domain is found at 856-1008 (TLGCILSELK…MTTVDEADEG (153 aa)). 895 to 902 (YLRLDGKT) provides a ligand contact to ATP. Residue Lys-994 forms a Glycyl lysine isopeptide (Lys-Gly) (interchain with G-Cter in SUMO2) linkage. Residues 1003 to 1006 (DEAD) carry the DEAD box motif.

It belongs to the SNF2/RAD54 helicase family. In terms of assembly, binds to DNA preferentially in the vicinity of transcriptional start sites. Interacts with MSH2 and TRIM28. Part of a complex composed of TRIM28, HDAC1, HDAC2 and EHMT2. Interacts with PCNA.

The protein localises to the nucleus. Its subcellular location is the chromosome. The catalysed reaction is ATP + H2O = ADP + phosphate + H(+). Functionally, DNA helicase that possesses intrinsic ATP-dependent nucleosome-remodeling activity and is both required for DNA repair and heterochromatin organization. Promotes DNA end resection of double-strand breaks (DSBs) following DNA damage: probably acts by weakening histone DNA interactions in nucleosomes flanking DSBs. Required for the restoration of heterochromatin organization after replication. Acts at replication sites to facilitate the maintenance of heterochromatin by directing H3 and H4 histones deacetylation, H3 'Lys-9' trimethylation (H3K9me3) and restoration of silencing. This Rattus norvegicus (Rat) protein is SWI/SNF-related matrix-associated actin-dependent regulator of chromatin subfamily A containing DEAD/H box 1 (Smarcad1).